A 981-amino-acid chain; its full sequence is Serine/threonine-protein kinase D1044.8 (981 aa).

The Protein kinase domain maps to 453 to 725 (YELLDQLGAG…MCGVRLLEYL (273 aa)). ATP contacts are provided by residues 459–467 (LGAGAFGCV) and K488. The Proton acceptor role is filled by D591. The span at 735 to 746 (TSDMTASQSSYN) shows a compositional bias: polar residues. 2 disordered regions span residues 735-802 (TSDM…PSSI) and 823-847 (IPSRRRVQTCSTEHPARSSSSTELK). Positions 752-762 (SPSSLNSSTSS) are enriched in low complexity. Residues 830 to 847 (QTCSTEHPARSSSSTELK) are compositionally biased toward polar residues.

It belongs to the protein kinase superfamily. NEK Ser/Thr protein kinase family. NIMA subfamily. Requires Mg(2+) as cofactor.

The enzyme catalyses L-seryl-[protein] + ATP = O-phospho-L-seryl-[protein] + ADP + H(+). The catalysed reaction is L-threonyl-[protein] + ATP = O-phospho-L-threonyl-[protein] + ADP + H(+). This chain is Serine/threonine-protein kinase D1044.8 (nekl-4), found in Caenorhabditis elegans.